A 701-amino-acid chain; its full sequence is Polyribonucleotide nucleotidyltransferase (701 aa).

Residues aspartate 485 and aspartate 491 each coordinate Mg(2+). The KH domain maps to 552 to 611 (PKTQIMSINPDKIRDVIGAGGKVINKIIQDTGVKIDIKEDGTVFVSSTDHNGVNEAIKII). The region spanning 621-689 (GEVYLGKVTK…NQGRINLSRK (69 aa)) is the S1 motif domain.

This sequence belongs to the polyribonucleotide nucleotidyltransferase family. Mg(2+) serves as cofactor.

It is found in the cytoplasm. The enzyme catalyses RNA(n+1) + phosphate = RNA(n) + a ribonucleoside 5'-diphosphate. Functionally, involved in mRNA degradation. Catalyzes the phosphorolysis of single-stranded polyribonucleotides processively in the 3'- to 5'-direction. The protein is Polyribonucleotide nucleotidyltransferase of Clostridium beijerinckii (strain ATCC 51743 / NCIMB 8052) (Clostridium acetobutylicum).